A 282-amino-acid chain; its full sequence is Bis(5'-nucleosyl)-tetraphosphatase, symmetrical (282 aa).

This sequence belongs to the Ap4A hydrolase family.

It catalyses the reaction P(1),P(4)-bis(5'-adenosyl) tetraphosphate + H2O = 2 ADP + 2 H(+). In terms of biological role, hydrolyzes diadenosine 5',5'''-P1,P4-tetraphosphate to yield ADP. This chain is Bis(5'-nucleosyl)-tetraphosphatase, symmetrical, found in Escherichia coli O45:K1 (strain S88 / ExPEC).